The sequence spans 548 residues: Glucose-6-phosphate isomerase 1 (548 aa).

The Proton donor role is filled by Glu-353. Active-site residues include His-384 and Lys-512.

Belongs to the GPI family.

It localises to the cytoplasm. The enzyme catalyses alpha-D-glucose 6-phosphate = beta-D-fructose 6-phosphate. It participates in carbohydrate biosynthesis; gluconeogenesis. It functions in the pathway carbohydrate degradation; glycolysis; D-glyceraldehyde 3-phosphate and glycerone phosphate from D-glucose: step 2/4. Its function is as follows. Catalyzes the reversible isomerization of glucose-6-phosphate to fructose-6-phosphate. In Neisseria meningitidis serogroup A / serotype 4A (strain DSM 15465 / Z2491), this protein is Glucose-6-phosphate isomerase 1.